The chain runs to 98 residues: NADH-ubiquinone oxidoreductase chain 4L (98 aa).

The next 3 membrane-spanning stretches (helical) occupy residues 1 to 21 (MSIVYINIFLAFIMSLLGMLI), 29 to 49 (SLLCLEGMMLSLFVMITLIIL), and 61 to 81 (IILLVFAACEAALGLSLLVMV).

It belongs to the complex I subunit 4L family. As to quaternary structure, core subunit of respiratory chain NADH dehydrogenase (Complex I) which is composed of 45 different subunits.

It localises to the mitochondrion inner membrane. It carries out the reaction a ubiquinone + NADH + 5 H(+)(in) = a ubiquinol + NAD(+) + 4 H(+)(out). In terms of biological role, core subunit of the mitochondrial membrane respiratory chain NADH dehydrogenase (Complex I) which catalyzes electron transfer from NADH through the respiratory chain, using ubiquinone as an electron acceptor. Part of the enzyme membrane arm which is embedded in the lipid bilayer and involved in proton translocation. The sequence is that of NADH-ubiquinone oxidoreductase chain 4L (MT-ND4L) from Herpestes javanicus (Small Indian mongoose).